The chain runs to 361 residues: Chorismate synthase (361 aa).

The NADP(+) site is built by Arg48 and Arg54. Residues 125–127 (RSS), 238–239 (NA), Gly278, 293–297 (KPTSS), and Arg319 each bind FMN.

This sequence belongs to the chorismate synthase family. Homotetramer. The cofactor is FMNH2.

The enzyme catalyses 5-O-(1-carboxyvinyl)-3-phosphoshikimate = chorismate + phosphate. Its pathway is metabolic intermediate biosynthesis; chorismate biosynthesis; chorismate from D-erythrose 4-phosphate and phosphoenolpyruvate: step 7/7. Catalyzes the anti-1,4-elimination of the C-3 phosphate and the C-6 proR hydrogen from 5-enolpyruvylshikimate-3-phosphate (EPSP) to yield chorismate, which is the branch point compound that serves as the starting substrate for the three terminal pathways of aromatic amino acid biosynthesis. This reaction introduces a second double bond into the aromatic ring system. In Citrobacter koseri (strain ATCC BAA-895 / CDC 4225-83 / SGSC4696), this protein is Chorismate synthase.